We begin with the raw amino-acid sequence, 216 residues long: ATP-dependent Clp protease proteolytic subunit (216 aa).

Catalysis depends on serine 101, which acts as the Nucleophile. Residue histidine 126 is part of the active site.

This sequence belongs to the peptidase S14 family. In terms of assembly, component of the chloroplastic Clp protease core complex.

It is found in the plastid. The protein resides in the chloroplast stroma. It carries out the reaction Hydrolysis of proteins to small peptides in the presence of ATP and magnesium. alpha-casein is the usual test substrate. In the absence of ATP, only oligopeptides shorter than five residues are hydrolyzed (such as succinyl-Leu-Tyr-|-NHMec, and Leu-Tyr-Leu-|-Tyr-Trp, in which cleavage of the -Tyr-|-Leu- and -Tyr-|-Trp bonds also occurs).. Cleaves peptides in various proteins in a process that requires ATP hydrolysis. Has a chymotrypsin-like activity. Plays a major role in the degradation of misfolded proteins. This Oryza nivara (Indian wild rice) protein is ATP-dependent Clp protease proteolytic subunit.